The primary structure comprises 240 residues: ATP synthase subunit a (240 aa).

6 helical membrane passes run Trp41 to Ile61, Phe92 to Ile112, Ser121 to Phe141, Phe152 to Phe172, Val191 to Val211, and Leu212 to Phe232.

It belongs to the ATPase A chain family. In terms of assembly, F-type ATPases have 2 components, CF(1) - the catalytic core - and CF(0) - the membrane proton channel. CF(1) has five subunits: alpha(3), beta(3), gamma(1), delta(1), epsilon(1). CF(0) has three main subunits: a(1), b(2) and c(9-12). The alpha and beta chains form an alternating ring which encloses part of the gamma chain. CF(1) is attached to CF(0) by a central stalk formed by the gamma and epsilon chains, while a peripheral stalk is formed by the delta and b chains.

The protein localises to the cell inner membrane. In terms of biological role, key component of the proton channel; it plays a direct role in the translocation of protons across the membrane. This is ATP synthase subunit a from Desulfotalea psychrophila (strain LSv54 / DSM 12343).